A 524-amino-acid polypeptide reads, in one-letter code: Serine/threonine-protein kinase PAK 2 (524 aa).

Residues 1 to 81 are disordered; that stretch reads MSDNGELEDK…PEISPPSDFE (81 aa). N-acetylserine is present on S2. 4 positions are modified to phosphoserine: S2, S20, S55, and S58. T60 bears the Phosphothreonine mark. K62 is modified (N6-acetyllysine). S64 bears the Phosphoserine mark. Over residues 67 to 81 the composition is skewed to basic and acidic residues; that stretch reads KEKERPEISPPSDFE. The segment at 69-112 is GTPase-binding; it reads KERPEISPPSDFEHTIHVGFDAVTGEFTGMPEQWARLLQTSNIT. The tract at residues 69-137 is autoregulatory region; the sequence is KERPEISPPS…KFYDSNTVKQ (69 aa). The CRIB domain maps to 74–87; that stretch reads ISPPSDFEHTIHVG. K128 carries the post-translational modification N6-acetyllysine. T134 carries the phosphothreonine modification. At Y139 the chain carries Phosphotyrosine. S141 bears the Phosphoserine mark. The tract at residues 142–188 is disordered; it reads FTPPEKDGFPSGTPALNTKGSETSAVVTEEDDDDEDAAPPVIAPRPD. Residue T143 is modified to Phosphothreonine. Residue S152 is modified to Phosphoserine. Phosphothreonine is present on residues T154, T159, and T169. A compositionally biased stretch (polar residues) spans 155–167; it reads PALNTKGSETSAV. The segment covering 169 to 178 has biased composition (acidic residues); the sequence is TEEDDDDEDA. A Phosphoserine modification is found at S197. The segment at 204-228 is disordered; that stretch reads APVGDSNVDSGAKSSDKQKKKAKMT. A Nuclear localization signal motif is present at residues 245 to 251; it reads PKKKYTR. In terms of domain architecture, Protein kinase spans 249-499; it reads YTRYEKIGQG…SAKELLQHPF (251 aa). ATP is bound by residues 255-263 and K278; that span reads IGQGASGTV. R367 acts as the Proton acceptor in catalysis. T402 is modified (phosphothreonine; by autocatalysis).

Belongs to the protein kinase superfamily. STE Ser/Thr protein kinase family. STE20 subfamily. Interacts tightly with GTP-bound but not GDP-bound CDC42/p21 and RAC1. Interacts with SH3MD4. Interacts with SCRIB. Interacts with ARHGEF7 and GIT1. PAK-2p34 interacts with ARHGAP10. Interacts with RAC1. In terms of processing, full-length PAK2 is autophosphorylated when activated by CDC42/p21. Following cleavage, both peptides, PAK-2p27 and PAK-2p34, become highly autophosphorylated. Autophosphorylation of PAK-2p27 can occur in the absence of any effectors and is dependent on phosphorylation of Thr-402, because PAK-2p27 is acting as an exogenous substrate. Post-translationally, during apoptosis proteolytically cleaved by caspase-3 or caspase-3-like proteases to yield active PAK-2p34. Ubiquitinated, leading to its proteasomal degradation.

The protein localises to the cytoplasm. It is found in the nucleus. It localises to the perinuclear region. Its subcellular location is the membrane. It catalyses the reaction L-seryl-[protein] + ATP = O-phospho-L-seryl-[protein] + ADP + H(+). It carries out the reaction L-threonyl-[protein] + ATP = O-phospho-L-threonyl-[protein] + ADP + H(+). Activated by binding small G proteins. Binding of GTP-bound CDC42 or RAC1 to the autoregulatory region releases monomers from the autoinhibited dimer, enables phosphorylation of Thr-402 and allows the kinase domain to adopt an active structure. Following caspase cleavage, autophosphorylated PAK-2p34 is constitutively active. Functionally, serine/threonine protein kinase that plays a role in a variety of different signaling pathways including cytoskeleton regulation, cell motility, cell cycle progression, apoptosis or proliferation. Acts as a downstream effector of the small GTPases CDC42 and RAC1. Activation by the binding of active CDC42 and RAC1 results in a conformational change and a subsequent autophosphorylation on several serine and/or threonine residues. Full-length PAK2 stimulates cell survival and cell growth. Phosphorylates MAPK4 and MAPK6 and activates the downstream target MAPKAPK5, a regulator of F-actin polymerization and cell migration. Phosphorylates JUN and plays an important role in EGF-induced cell proliferation. Phosphorylates many other substrates including histone H4 to promote assembly of H3.3 and H4 into nucleosomes, BAD, ribosomal protein S6, or MBP. Phosphorylates CASP7, thereby preventing its activity. Additionally, associates with ARHGEF7 and GIT1 to perform kinase-independent functions such as spindle orientation control during mitosis. On the other hand, apoptotic stimuli such as DNA damage lead to caspase-mediated cleavage of PAK2, generating PAK-2p34, an active p34 fragment that translocates to the nucleus and promotes cellular apoptosis involving the JNK signaling pathway. Caspase-activated PAK2 phosphorylates MKNK1 and reduces cellular translation. The chain is Serine/threonine-protein kinase PAK 2 (Pak2) from Mus musculus (Mouse).